We begin with the raw amino-acid sequence, 368 residues long: D-alanine--D-alanine ligase (368 aa).

Residues 151-358 (KKLLAAEGLP…YGTLVSTLVD (208 aa)) form the ATP-grasp domain. 179–234 (KSRLHLPVFVKPARGGSSIGITRVAEWAALDDAIAHARLHDPKVIVESGIIGREVE) provides a ligand contact to ATP. D313, E325, and N327 together coordinate Mg(2+).

It belongs to the D-alanine--D-alanine ligase family. Requires Mg(2+) as cofactor. The cofactor is Mn(2+).

It localises to the cytoplasm. The catalysed reaction is 2 D-alanine + ATP = D-alanyl-D-alanine + ADP + phosphate + H(+). Its pathway is cell wall biogenesis; peptidoglycan biosynthesis. In terms of biological role, cell wall formation. This chain is D-alanine--D-alanine ligase, found in Rhodococcus jostii (strain RHA1).